The sequence spans 477 residues: Ribulose bisphosphate carboxylase large chain (477 aa).

A propeptide spanning residues 1–2 (MS) is cleaved from the precursor. P3 carries the post-translational modification N-acetylproline. K14 carries the post-translational modification N6,N6,N6-trimethyllysine. T173 contributes to the substrate binding site. The Proton acceptor role is filled by K175. K177 is a binding site for substrate. Mg(2+)-binding residues include K201, D203, and E204. An N6-carboxylysine modification is found at K201. H294 functions as the Proton acceptor in the catalytic mechanism. Positions 295, 327, and 379 each coordinate substrate.

Belongs to the RuBisCO large chain family. Type I subfamily. As to quaternary structure, heterohexadecamer of 8 large chains and 8 small chains; disulfide-linked. The disulfide link is formed within the large subunit homodimers. It depends on Mg(2+) as a cofactor. In terms of processing, the disulfide bond which can form in the large chain dimeric partners within the hexadecamer appears to be associated with oxidative stress and protein turnover.

It localises to the plastid. Its subcellular location is the chloroplast. The enzyme catalyses 2 (2R)-3-phosphoglycerate + 2 H(+) = D-ribulose 1,5-bisphosphate + CO2 + H2O. The catalysed reaction is D-ribulose 1,5-bisphosphate + O2 = 2-phosphoglycolate + (2R)-3-phosphoglycerate + 2 H(+). Functionally, ruBisCO catalyzes two reactions: the carboxylation of D-ribulose 1,5-bisphosphate, the primary event in carbon dioxide fixation, as well as the oxidative fragmentation of the pentose substrate in the photorespiration process. Both reactions occur simultaneously and in competition at the same active site. This is Ribulose bisphosphate carboxylase large chain from Gerbera jamesonii (Transvaal daisy).